Consider the following 1018-residue polypeptide: MDLIRGVLLRLLLLASSLGPGAAPLRSALRKQGKVGPPLDIILDALNCSAFSIQWKMPRHPPSPIMGYTVFYSEVGIDKSLQERSYGVPPGLDTPTSGRLDHQMIFEEVIGDLKPGTEYRVSMAAYSQTGKGRLSSPQHVTTLPQDSCLPPTAPQQPHVIVVSDSEVALSWKPGESEGSSPIQYYSVEFTRPDFDKSWTSIREQIQMDSMVIKGLDPDTNYQFAVRAVNPHGSSPRSQPSSTIRTARPEESGSGRYGPHYATDTEAGEDDDTFEDDLDLDISFEEVKPLPAIKEGNKKFFVESKMAPRPNPMTVSRLVPPTPASLPTTAVAPQPTPVDRKGKHGVAVMPRLFDTSCDETVCSADSFCVSDYTWGGSRCHCNLGKGGESCSEDIVIQYPQFFGHSYVTFEPLKNSYQAFQITLEFRAEAEDGLLLYCGENEHGRGDFMSLAVIRRSLQFRFNCGTGVAIIVSETKIKLGGWHTVTLYRDGLNGLLQLNNGTPVTGQSQGQYSKITFRTPLYLGGAPSAYWLVRATGTNRGFQGCVQALTVNGKRLDLRPWPLGKALSGADVGECSSGICDEASCINGGTCMASKADSYICLCPLGFRGRHCEDAFTLTIPQFKESLRSYAATPWPLEPRHYLSFMEFEVTFRPDSEDGVLLYSYDTGSKDFLSINMAGGHVEFRFDCGSGTGVLRSEEPLTLGHWHELCVSRTAKNGILQVDKQKAVEGMAEGGFTQIKCNSDIFIGGVPNYDDVKKNSGILKPFSGSIQKIILNDRTIHVKHDFTWGVNVENAAHPCVGSPCAHGGSCRPRKEGYECDCPLGFEGLHCQKAITEAIEIPQFIGRSYLTYDNPDILKRVSGSRSNAFMRFKTTAKDGLLLWRGDSPMRPNSDFISLGLRDGALVFSYNLGSGVASIMVNGSFNDGRWHRVKAVRDGQSGKITVDDYGARTGKSPGMMRQLNINGALYVGGMKEIALHTNRQYMRGLVGCISHFTLSTDYHISLVEDAVDGKNINTCGAK.

The N-terminal stretch at 1–23 (MDLIRGVLLRLLLLASSLGPGAA) is a signal peptide. Fibronectin type-III domains are found at residues 37-145 (PPLD…TLPQ) and 153-248 (APQQ…TARP). Asparagine 47 carries N-linked (GlcNAc...) asparagine glycosylation. Residues 228 to 274 (VNPHGSSPRSQPSSTIRTARPEESGSGRYGPHYATDTEAGEDDDTFE) form a disordered region. Polar residues predominate over residues 231–244 (HGSSPRSQPSSTIR). Over residues 265–274 (EAGEDDDTFE) the composition is skewed to acidic residues. Positions 352–390 (FDTSCDETVCSADSFCVSDYTWGGSRCHCNLGKGGESCS) constitute an EGF-like 1 domain. Intrachain disulfides connect cysteine 356–cysteine 367, cysteine 361–cysteine 378, cysteine 380–cysteine 389, cysteine 543–cysteine 573, cysteine 578–cysteine 589, cysteine 583–cysteine 599, cysteine 601–cysteine 610, cysteine 797–cysteine 808, cysteine 802–cysteine 817, cysteine 819–cysteine 828, and cysteine 988–cysteine 1015. Residues 395–573 (IQYPQFFGHS…ALSGADVGEC (179 aa)) enclose the Laminin G-like 1 domain. EGF-like domains lie at 574–611 (SSGICDEASCINGGTCMASKADSYICLCPLGFRGRHCE) and 793–829 (AAHPCVGSPCAHGGSCRPRKEGYECDCPLGFEGLHCQ). In terms of domain architecture, Laminin G-like 2 spans 618-797 (IPQFKESLRS…VNVENAAHPC (180 aa)). The Laminin G-like 3 domain maps to 836–1015 (IEIPQFIGRS…AVDGKNINTC (180 aa)).

Interacts with DAG1 alpha-dystroglycan. Interacts with GPR158 and GPR179; transsynaptic interaction is required for synaptic organization of photoreceptor cells. O-glycosylated; contains chondroitin sulfate and heparan sulfate.

Its subcellular location is the secreted. It localises to the extracellular space. The protein localises to the extracellular matrix. It is found in the synaptic cleft. The protein resides in the presynaptic active zone. Its function is as follows. Involved in both the retinal photoreceptor ribbon synapse formation and physiological functions of visual perception. Plays a key role in the synaptic organization of photoreceptors by mediating transsynaptic interaction between alpha-dystroglycan and GPR179 on the postsynaptic membrane. Necessary for proper bipolar dendritic tip apposition to the photoreceptor ribbon synapse. Promotes matrix assembly and cell adhesiveness. This Bos taurus (Bovine) protein is Pikachurin (EGFLAM).